The chain runs to 280 residues: Chaperone protein DnaJ 2 (280 aa).

Positions 6–70 (DYYAILGVPR…EKRRIYDTYG (65 aa)) constitute a J domain.

The protein belongs to the DnaJ family. In terms of assembly, forms a heterononamer with DnaJ and DafA in the resting state. Three copies of each protein are present in the complex.

Its subcellular location is the cytoplasm. Its function is as follows. Does not influence ATP binding or hydrolysis nor ADP release. Exerts influence on the interaction of DnaK with substrates; in the presence of DafA, DnaJ inhibits substrate binding, and substrate already bound to DnaK is displaced by DnaJ and DafA. The sequence is that of Chaperone protein DnaJ 2 (dnaJ2) from Thermus thermophilus (strain ATCC 27634 / DSM 579 / HB8).